A 188-amino-acid polypeptide reads, in one-letter code: Ribosome maturation factor RimM (188 aa).

The PRC barrel domain maps to 112–187; it reads SDSYYWVDLI…LLTLDWQSDW (76 aa).

Belongs to the RimM family. Binds ribosomal protein uS19.

The protein localises to the cytoplasm. In terms of biological role, an accessory protein needed during the final step in the assembly of 30S ribosomal subunit, possibly for assembly of the head region. Essential for efficient processing of 16S rRNA. May be needed both before and after RbfA during the maturation of 16S rRNA. It has affinity for free ribosomal 30S subunits but not for 70S ribosomes. The chain is Ribosome maturation factor RimM from Polynucleobacter asymbioticus (strain DSM 18221 / CIP 109841 / QLW-P1DMWA-1) (Polynucleobacter necessarius subsp. asymbioticus).